Here is a 183-residue protein sequence, read N- to C-terminus: MKKKTSLSEEDQALFRQLMVGTRQIKQDTIVHRPLRKKITEVPTRRLIQEQADASHYFSDEFQPLLNTEGPVKYVREDVSHFELKKMRRGDYSPELFLDLHGLTQLQAKQELGALIAACRREHIFCACVMHGHGKHILKQQTPLWLAQHPHVMAFHQAPKEYGGDAALLVLIEVEEWQPPELP.

Residues 98–173 (LDLHGLTQLQ…GDAALLVLIE (76 aa)) enclose the Smr domain.

This sequence belongs to the SmrB family. As to quaternary structure, associates with collided ribosomes, but not with correctly translating polysomes.

Acts as a ribosome collision sensor. Detects stalled/collided disomes (pairs of ribosomes where the leading ribosome is stalled and a second ribosome has collided with it) and endonucleolytically cleaves mRNA at the 5' boundary of the stalled ribosome. Stalled/collided disomes form a new interface (primarily via the 30S subunits) that binds SmrB. Cleaved mRNA becomes available for tmRNA ligation, leading to ribosomal subunit dissociation and rescue of stalled ribosomes. This Salmonella paratyphi A (strain ATCC 9150 / SARB42) protein is Ribosome rescue factor SmrB.